A 476-amino-acid polypeptide reads, in one-letter code: Aspartyl/glutamyl-tRNA(Asn/Gln) amidotransferase subunit B (476 aa).

It belongs to the GatB/GatE family. GatB subfamily. Heterotrimer of A, B and C subunits.

The catalysed reaction is L-glutamyl-tRNA(Gln) + L-glutamine + ATP + H2O = L-glutaminyl-tRNA(Gln) + L-glutamate + ADP + phosphate + H(+). It carries out the reaction L-aspartyl-tRNA(Asn) + L-glutamine + ATP + H2O = L-asparaginyl-tRNA(Asn) + L-glutamate + ADP + phosphate + 2 H(+). Allows the formation of correctly charged Asn-tRNA(Asn) or Gln-tRNA(Gln) through the transamidation of misacylated Asp-tRNA(Asn) or Glu-tRNA(Gln) in organisms which lack either or both of asparaginyl-tRNA or glutaminyl-tRNA synthetases. The reaction takes place in the presence of glutamine and ATP through an activated phospho-Asp-tRNA(Asn) or phospho-Glu-tRNA(Gln). The polypeptide is Aspartyl/glutamyl-tRNA(Asn/Gln) amidotransferase subunit B (Bacillus velezensis (strain DSM 23117 / BGSC 10A6 / LMG 26770 / FZB42) (Bacillus amyloliquefaciens subsp. plantarum)).